A 380-amino-acid chain; its full sequence is 4-hydroxy-3-methylbut-2-en-1-yl diphosphate synthase (flavodoxin) (380 aa).

[4Fe-4S] cluster is bound by residues Cys275, Cys278, Cys310, and Glu317.

It belongs to the IspG family. The cofactor is [4Fe-4S] cluster.

It catalyses the reaction (2E)-4-hydroxy-3-methylbut-2-enyl diphosphate + oxidized [flavodoxin] + H2O + 2 H(+) = 2-C-methyl-D-erythritol 2,4-cyclic diphosphate + reduced [flavodoxin]. Its pathway is isoprenoid biosynthesis; isopentenyl diphosphate biosynthesis via DXP pathway; isopentenyl diphosphate from 1-deoxy-D-xylulose 5-phosphate: step 5/6. Converts 2C-methyl-D-erythritol 2,4-cyclodiphosphate (ME-2,4cPP) into 1-hydroxy-2-methyl-2-(E)-butenyl 4-diphosphate. This chain is 4-hydroxy-3-methylbut-2-en-1-yl diphosphate synthase (flavodoxin), found in Hyphomonas neptunium (strain ATCC 15444).